The following is a 149-amino-acid chain: Large ribosomal subunit protein uL13 (149 aa).

Belongs to the universal ribosomal protein uL13 family. Part of the 50S ribosomal subunit.

This protein is one of the early assembly proteins of the 50S ribosomal subunit, although it is not seen to bind rRNA by itself. It is important during the early stages of 50S assembly. The polypeptide is Large ribosomal subunit protein uL13 (Prosthecochloris aestuarii (strain DSM 271 / SK 413)).